The following is a 144-amino-acid chain: Bacilliredoxin BCE_4227 (144 aa).

It belongs to the bacilliredoxin family.

The protein is Bacilliredoxin BCE_4227 of Bacillus cereus (strain ATCC 10987 / NRS 248).